Consider the following 109-residue polypeptide: MEQFEATSVEQAYLRWKEGKTALVDIRDPQSYEAGHAPGAFHLTNSSLHTFMQQTDFDQPVMVMCYHGNSSKGAAQYLLQQGFDVVYSIDGGFEAWARSYPQDITSESR.

Residues 17–105 (KEGKTALVDI…WARSYPQDIT (89 aa)) form the Rhodanese domain. Cys-65 (cysteine persulfide intermediate) is an active-site residue.

Belongs to the GlpE family.

It is found in the cytoplasm. The catalysed reaction is thiosulfate + hydrogen cyanide = thiocyanate + sulfite + 2 H(+). The enzyme catalyses thiosulfate + [thioredoxin]-dithiol = [thioredoxin]-disulfide + hydrogen sulfide + sulfite + 2 H(+). Transferase that catalyzes the transfer of sulfur from thiosulfate to thiophilic acceptors such as cyanide or dithiols. May function in a CysM-independent thiosulfate assimilation pathway by catalyzing the conversion of thiosulfate to sulfite, which can then be used for L-cysteine biosynthesis. The chain is Thiosulfate sulfurtransferase GlpE from Yersinia pestis.